Consider the following 396-residue polypeptide: NADH-quinone oxidoreductase subunit D (396 aa).

Belongs to the complex I 49 kDa subunit family. NDH-1 is composed of 14 different subunits. Subunits NuoB, C, D, E, F, and G constitute the peripheral sector of the complex.

Its subcellular location is the cell inner membrane. The catalysed reaction is a quinone + NADH + 5 H(+)(in) = a quinol + NAD(+) + 4 H(+)(out). Functionally, NDH-1 shuttles electrons from NADH, via FMN and iron-sulfur (Fe-S) centers, to quinones in the respiratory chain. The immediate electron acceptor for the enzyme in this species is believed to be ubiquinone. Couples the redox reaction to proton translocation (for every two electrons transferred, four hydrogen ions are translocated across the cytoplasmic membrane), and thus conserves the redox energy in a proton gradient. The sequence is that of NADH-quinone oxidoreductase subunit D from Bartonella tribocorum (strain CIP 105476 / IBS 506).